A 617-amino-acid polypeptide reads, in one-letter code: Chaperone protein HscA homolog (617 aa).

This sequence belongs to the heat shock protein 70 family.

Chaperone involved in the maturation of iron-sulfur cluster-containing proteins. Has a low intrinsic ATPase activity which is markedly stimulated by HscB. The polypeptide is Chaperone protein HscA homolog (Aliivibrio salmonicida (strain LFI1238) (Vibrio salmonicida (strain LFI1238))).